Here is a 402-residue protein sequence, read N- to C-terminus: Nicotinate phosphoribosyltransferase (402 aa).

A Phosphohistidine; by autocatalysis modification is found at His-224.

It belongs to the NAPRTase family. Post-translationally, transiently phosphorylated on a His residue during the reaction cycle. Phosphorylation strongly increases the affinity for substrates and increases the rate of nicotinate D-ribonucleotide production. Dephosphorylation regenerates the low-affinity form of the enzyme, leading to product release.

The enzyme catalyses nicotinate + 5-phospho-alpha-D-ribose 1-diphosphate + ATP + H2O = nicotinate beta-D-ribonucleotide + ADP + phosphate + diphosphate. Its pathway is cofactor biosynthesis; NAD(+) biosynthesis; nicotinate D-ribonucleotide from nicotinate: step 1/1. In terms of biological role, catalyzes the synthesis of beta-nicotinate D-ribonucleotide from nicotinate and 5-phospho-D-ribose 1-phosphate at the expense of ATP. The protein is Nicotinate phosphoribosyltransferase of Neisseria gonorrhoeae (strain ATCC 700825 / FA 1090).